Consider the following 739-residue polypeptide: UPF0313 protein YgiQ (739 aa).

One can recognise a Radical SAM core domain in the interval 372 to 650 (AYEMIRFSVN…KALLRYHDPA (279 aa)). Residues Cys-386, Cys-390, and Cys-393 each coordinate [4Fe-4S] cluster. The segment at 685 to 739 (REARRQNRNTRPALTKHTPMATQRQTPATAKKASSTQSRPVNAGAKKRPKAAVGR) is disordered. The segment covering 704–724 (MATQRQTPATAKKASSTQSRP) has biased composition (polar residues). Over residues 729–739 (AKKRPKAAVGR) the composition is skewed to basic residues.

This sequence belongs to the UPF0313 family. [4Fe-4S] cluster is required as a cofactor.

In Shigella flexneri, this protein is UPF0313 protein YgiQ.